Reading from the N-terminus, the 352-residue chain is Glucose 1-dehydrogenase 1 (352 aa).

Residue C35 coordinates Zn(2+). T37 is a substrate binding site. H60 and E61 together coordinate Zn(2+). N83 lines the substrate pocket. The Zn(2+) site is built by C87, C90, C93, and C101. E108, Q144, and D148 together coordinate substrate. Q144 contacts Zn(2+). NADP(+)-binding positions include 182–185, 204–206, 264–266, 292–294, and K341; these read TGTI, NKR, FGF, and LIN. N294 is a substrate binding site.

This sequence belongs to the zinc-containing alcohol dehydrogenase family. Glucose 1-dehydrogenase subfamily. Zn(2+) serves as cofactor.

The enzyme catalyses D-glucose + NAD(+) = D-glucono-1,5-lactone + NADH + H(+). It catalyses the reaction D-glucose + NADP(+) = D-glucono-1,5-lactone + NADPH + H(+). In terms of biological role, catalyzes the NAD(P)(+)-dependent oxidation of D-glucose to D-gluconate via gluconolactone. Can utilize both NAD(+) and NADP(+) as electron acceptor. Is involved in the degradation of glucose through a non-phosphorylative variant of the Entner-Doudoroff pathway. The sequence is that of Glucose 1-dehydrogenase 1 from Picrophilus torridus (strain ATCC 700027 / DSM 9790 / JCM 10055 / NBRC 100828 / KAW 2/3).